The chain runs to 409 residues: Triose phosphate/phosphate translocator, chloroplastic (409 aa).

The N-terminal 85 residues, 1 to 85, are a transit peptide targeting the chloroplast; it reads MSALGTLSGG…ARRHTLQPPA (85 aa). Residues 86–104 lie on the Chloroplast intermembrane side of the membrane; the sequence is AAAESAGEAKSVGFLEKYP. A helical transmembrane segment spans residues 105–125; the sequence is ALVTGFFFFMWYFLNVIFNIL. Over 126 to 137 the chain is Lumenal; it reads NKKIYNYFPYPY. A helical membrane pass occupies residues 138–158; the sequence is FVSLIHLVVGVVYCLISWSVG. Topologically, residues 159–215 are chloroplast intermembrane; the sequence is LPKRAPINGTLLKLLFPVALCHGIGHITSNVSFAAVAVSFAHTIKALEPFFSAAATQ. Residues 216-236 traverse the membrane as a helical segment; the sequence is FILGQQVPFSLWLSLAPVVIG. Residues 237 to 280 are Lumenal-facing; the sequence is VSMASLTELSFNWTGFINAMISNISFTYRSIYSKKAMTDMDSTN. Residues 281 to 300 form a helical membrane-spanning segment; that stretch reads VYAYISIIALIVCIPPALIF. At 301–378 the chain is on the chloroplast intermembrane side; the sequence is EGPKLMQHGF…IVFGNKISTQ (78 aa). The chain crosses the membrane as a helical span at residues 379–399; that stretch reads TGIGTSIAIAGVAMYSYIKAK. Residues 400 to 409 are Lumenal-facing; it reads IEEEKRKKSA.

It belongs to the TPT transporter family. TPT (TC 2.A.7.9) subfamily. As to quaternary structure, homodimer.

It is found in the plastid. It localises to the chloroplast membrane. Functionally, mediates the export of fixed carbons from the chloroplasts into the cytosol in the form of triose phosphates. In addition, it can also bind and transport phosphoenolpyruvate, thereby increasing the photosynthetic efficiency of C4-plants. This Zea mays (Maize) protein is Triose phosphate/phosphate translocator, chloroplastic (TPT).